Here is a 461-residue protein sequence, read N- to C-terminus: Bifunctional protein GlmU (461 aa).

A pyrophosphorylase region spans residues 1-232 (MNLQIIILAA…SFEVQGINNR (232 aa)). UDP-N-acetyl-alpha-D-glucosamine contacts are provided by residues 8–11 (LAAG), Lys-22, Gln-73, and 78–79 (GT). Asp-102 is a Mg(2+) binding site. Gly-142, Glu-157, and Asn-230 together coordinate UDP-N-acetyl-alpha-D-glucosamine. Residue Asn-230 participates in Mg(2+) binding. Residues 233-253 (QQLQQLERTWQQRAANQLMEK) form a linker region. Positions 254–461 (GATLADANRF…WKRPVKRERD (208 aa)) are N-acetyltransferase. UDP-N-acetyl-alpha-D-glucosamine is bound by residues Arg-336 and Lys-354. The active-site Proton acceptor is the His-366. The UDP-N-acetyl-alpha-D-glucosamine site is built by Tyr-369 and Asn-380. Residues Ala-383, 389–390 (NY), Ser-408, and Ala-426 contribute to the acetyl-CoA site.

The protein in the N-terminal section; belongs to the N-acetylglucosamine-1-phosphate uridyltransferase family. It in the C-terminal section; belongs to the transferase hexapeptide repeat family. As to quaternary structure, homotrimer. Mg(2+) is required as a cofactor.

Its subcellular location is the cytoplasm. The catalysed reaction is alpha-D-glucosamine 1-phosphate + acetyl-CoA = N-acetyl-alpha-D-glucosamine 1-phosphate + CoA + H(+). It carries out the reaction N-acetyl-alpha-D-glucosamine 1-phosphate + UTP + H(+) = UDP-N-acetyl-alpha-D-glucosamine + diphosphate. The protein operates within nucleotide-sugar biosynthesis; UDP-N-acetyl-alpha-D-glucosamine biosynthesis; N-acetyl-alpha-D-glucosamine 1-phosphate from alpha-D-glucosamine 6-phosphate (route II): step 2/2. It participates in nucleotide-sugar biosynthesis; UDP-N-acetyl-alpha-D-glucosamine biosynthesis; UDP-N-acetyl-alpha-D-glucosamine from N-acetyl-alpha-D-glucosamine 1-phosphate: step 1/1. It functions in the pathway bacterial outer membrane biogenesis; LPS lipid A biosynthesis. Functionally, catalyzes the last two sequential reactions in the de novo biosynthetic pathway for UDP-N-acetylglucosamine (UDP-GlcNAc). The C-terminal domain catalyzes the transfer of acetyl group from acetyl coenzyme A to glucosamine-1-phosphate (GlcN-1-P) to produce N-acetylglucosamine-1-phosphate (GlcNAc-1-P), which is converted into UDP-GlcNAc by the transfer of uridine 5-monophosphate (from uridine 5-triphosphate), a reaction catalyzed by the N-terminal domain. The chain is Bifunctional protein GlmU from Legionella pneumophila (strain Paris).